A 482-amino-acid chain; its full sequence is UDP-N-acetylmuramate--L-alanine ligase (482 aa).

123–129 (GTHGKTT) serves as a coordination point for ATP.

It belongs to the MurCDEF family.

The protein resides in the cytoplasm. It carries out the reaction UDP-N-acetyl-alpha-D-muramate + L-alanine + ATP = UDP-N-acetyl-alpha-D-muramoyl-L-alanine + ADP + phosphate + H(+). It functions in the pathway cell wall biogenesis; peptidoglycan biosynthesis. Functionally, cell wall formation. This Pseudomonas putida (strain ATCC 47054 / DSM 6125 / CFBP 8728 / NCIMB 11950 / KT2440) protein is UDP-N-acetylmuramate--L-alanine ligase.